The chain runs to 225 residues: UPF0758 protein Sputw3181_0338 (225 aa).

Positions 102–224 (VLTNPDLTRD…IVSFAERGWI (123 aa)) constitute an MPN domain. The Zn(2+) site is built by histidine 173, histidine 175, and aspartate 186. Residues 173 to 186 (HNHPSGIAEPSQAD) carry the JAMM motif motif.

It belongs to the UPF0758 family.

This Shewanella sp. (strain W3-18-1) protein is UPF0758 protein Sputw3181_0338.